A 226-amino-acid polypeptide reads, in one-letter code: Agamous-like MADS-box protein AP3 (226 aa).

The region spanning 1-61 (MARGKIEIKR…GKLHEYISPS (61 aa)) is the MADS-box domain. Residues 84–174 (YERMQENLKK…LHEFDARDRD (91 aa)) form the K-box domain.

Expressed during flower development in stamens and petals.

It is found in the nucleus. In terms of biological role, probable transcription factor involved in flower development. This Vitis vinifera (Grape) protein is Agamous-like MADS-box protein AP3.